Consider the following 412-residue polypeptide: Sexual development regulator umv3 (412 aa).

The disordered stretch occupies residues 1–197 (MSAQDDIDTG…PPLLSDLPRH (197 aa)). Polar residues-rich tracts occupy residues 73–93 (RANTLSKQQPRGDLSQSSASS) and 149–170 (RQSAASNRLSDTNSSAPSPGST). Residues 171-181 (ENERVRMHDQR) are compositionally biased toward basic and acidic residues. A Velvet domain is found at 195–388 (PRHSTDNKTY…ARQGIQVPVR (194 aa)).

This sequence belongs to the velvet family. VelC subfamily.

It is found in the nucleus. In terms of biological role, velvet-domain-containing protein not required for disease or sexual development on seedlings. The protein is Sexual development regulator umv3 of Mycosarcoma maydis (Corn smut fungus).